The primary structure comprises 671 residues: DNA ligase (671 aa).

NAD(+) contacts are provided by residues 34–38, 83–84, and Glu-117; these read DAEYD and SL. The N6-AMP-lysine intermediate role is filled by Lys-119. NAD(+)-binding residues include Arg-140, Glu-177, Lys-293, and Lys-317. Positions 411, 414, 429, and 434 each coordinate Zn(2+). One can recognise a BRCT domain in the interval 591–671; that stretch reads KVGGKFTGKT…EFLQMLEGEQ (81 aa).

It belongs to the NAD-dependent DNA ligase family. LigA subfamily. The cofactor is Mg(2+). It depends on Mn(2+) as a cofactor.

The catalysed reaction is NAD(+) + (deoxyribonucleotide)n-3'-hydroxyl + 5'-phospho-(deoxyribonucleotide)m = (deoxyribonucleotide)n+m + AMP + beta-nicotinamide D-nucleotide.. Functionally, DNA ligase that catalyzes the formation of phosphodiester linkages between 5'-phosphoryl and 3'-hydroxyl groups in double-stranded DNA using NAD as a coenzyme and as the energy source for the reaction. It is essential for DNA replication and repair of damaged DNA. This chain is DNA ligase, found in Geobacter metallireducens (strain ATCC 53774 / DSM 7210 / GS-15).